The primary structure comprises 186 residues: MMIILASSSPRRREILGRFFEIKVYPANVEERSTVKDSREKSLDIARKKALSVSSKFPGATIVAADTMVIFRGKTLGKPRNAEEARKMLRALSGNVHKVITGYCIIHNGRIIEGVEETEVKFREIGDELLEWYISTGEWKDKAGAYGIQGYASIFVEWIKGDYYNVVGLPIKVVVELTKLGFKPKR.

Asp-66 functions as the Proton acceptor in the catalytic mechanism.

It belongs to the Maf family. YhdE subfamily. A divalent metal cation is required as a cofactor.

It is found in the cytoplasm. The catalysed reaction is dTTP + H2O = dTMP + diphosphate + H(+). It carries out the reaction UTP + H2O = UMP + diphosphate + H(+). Functionally, nucleoside triphosphate pyrophosphatase that hydrolyzes dTTP and UTP. May have a dual role in cell division arrest and in preventing the incorporation of modified nucleotides into cellular nucleic acids. In Pyrococcus horikoshii (strain ATCC 700860 / DSM 12428 / JCM 9974 / NBRC 100139 / OT-3), this protein is dTTP/UTP pyrophosphatase.